The following is a 290-amino-acid chain: Pyridoxal kinase PdxY (290 aa).

Substrate is bound by residues Ser9 and 44–45 (TQ). ATP-binding residues include Asp112, Val144, Glu149, and Lys182. Asp221 contacts substrate.

The protein belongs to the pyridoxine kinase family. PdxY subfamily. In terms of assembly, homodimer. Requires Mg(2+) as cofactor.

It catalyses the reaction pyridoxal + ATP = pyridoxal 5'-phosphate + ADP + H(+). It functions in the pathway cofactor metabolism; pyridoxal 5'-phosphate salvage; pyridoxal 5'-phosphate from pyridoxal: step 1/1. Its function is as follows. Pyridoxal kinase involved in the salvage pathway of pyridoxal 5'-phosphate (PLP). Catalyzes the phosphorylation of pyridoxal to PLP. This Vibrio vulnificus (strain CMCP6) protein is Pyridoxal kinase PdxY.